Consider the following 230-residue polypeptide: Methyltransferase aurB (230 aa).

It belongs to the methyltransferase superfamily.

Its pathway is polyketide biosynthesis. Functionally, methyltransferase; part of the gene cluster that mediates the biosynthesis of aurovertins, fungal polyketides that exhibit potent inhibition of adenosine triphosphate synthase. Tha biosynthesis starts with the HR-PKS aurA that selects propionate as the starter unit; synthesizes a hexa-ene chain through the repeated functions of the KR and DH domains in the first six iterations; selectively introduces three alpha-methyl substitutions at C4, C6, and C16 using the S-adensylmethionine-dependent cMET; and shuts off KR and DH in the last three iterations to afford a 1,3,5-triketo portion that can undergo intramolecular cyclization to yield the alpha-pyrone intermediate. AurE may act as a cyclase and enhances the rate of pyrone formation and product release of aurA. The methyltransferase aurB then methylates the C17 hydroxyl group. C17 methylation is required to initiate epoxidation by the downstream monooxygenase aurC. The monooxygenase aurC and the epoxide hydrolase aurD can iteratively transform the terminal triene portion of the methylated precursor into the dioxabicyclo[3.2.1]octane scaffold of aurovertin E. Epoxidation modifications of the precursor occur in two separate steps; bis-epoxidation of the two terminal olefins takes place first, followed by another epoxidation that occurs at C7-C8 after tetrahydrofuran formation. The O-acyltransferase aurG converts aurovertin E to aurovertin A. The protein is Methyltransferase aurB of Calcarisporium arbuscula (Dendryphion arbuscula).